The following is a 500-amino-acid chain: Probable malate:quinone oxidoreductase (500 aa).

This sequence belongs to the MQO family. Requires FAD as cofactor.

The catalysed reaction is (S)-malate + a quinone = a quinol + oxaloacetate. Its pathway is carbohydrate metabolism; tricarboxylic acid cycle; oxaloacetate from (S)-malate (quinone route): step 1/1. This chain is Probable malate:quinone oxidoreductase, found in Bacillus thuringiensis (strain Al Hakam).